Reading from the N-terminus, the 330-residue chain is Inactive hydroxysteroid dehydrogenase-like protein 1 (330 aa).

Ala2 is modified (N-acetylalanine). The tract at residues 2–82 (AAVDSFYLLY…SGATDGIGKA (81 aa)) is required for mitochondria translocation. Residues 74 to 80 (GATDGIG), Asp125, and Lys222 contribute to the NADP(+) site.

This sequence belongs to the short-chain dehydrogenases/reductases (SDR) family. 17-beta-HSD 3 subfamily. Interacts with STYXL1. Highly expressed in testis and ovary. Also detected in thyroid, spinal cord, adrenal gland, heart, placenta, skeletal muscle, small intestine, colon, spleen, prostate and pancreas.

The protein localises to the mitochondrion. The polypeptide is Inactive hydroxysteroid dehydrogenase-like protein 1 (HSDL1) (Homo sapiens (Human)).